Here is a 96-residue protein sequence, read N- to C-terminus: 5-hydroxytryptamine receptor 2B (96 aa).

Residues 1-8 (CNQSTLQM) lie on the Extracellular side of the membrane. The N-linked (GlcNAc...) asparagine glycan is linked to Asn2. The chain crosses the membrane as a helical span at residues 9-30 (LLEIFVWIGYVSSGVNPLVYTL). Residues 24 to 28 (NPLVY) carry the NPxxY motif; important for ligand-induced conformation changes and signaling motif. The Cytoplasmic segment spans residues 31 to 96 (FNKTFRDAFG…STMYQSPVRL (66 aa)). A lipid anchor (S-palmitoyl cysteine) is attached at Cys45.

Belongs to the G-protein coupled receptor 1 family. As to quaternary structure, interacts (via C-terminus) with MPDZ.

Its subcellular location is the cell membrane. It is found in the synapse. The protein localises to the synaptosome. G-protein coupled receptor for 5-hydroxytryptamine (serotonin). Also functions as a receptor for various ergot alkaloid derivatives and psychoactive substances. Ligand binding causes a conformation change that triggers signaling via guanine nucleotide-binding proteins (G proteins) and modulates the activity of downstream effectors. HTR2B is coupled to G(q)/G(11) G alpha proteins and activates phospholipase C-beta, releasing diacylglycerol (DAG) and inositol 1,4,5-trisphosphate (IP3) second messengers that modulate the activity of phosphatidylinositol 3-kinase and promote the release of Ca(2+) ions from intracellular stores, respectively. Beta-arrestin family members inhibit signaling via G proteins and mediate activation of alternative signaling pathways. Plays a role in the regulation of dopamine and 5-hydroxytryptamine release, 5-hydroxytryptamine uptake and in the regulation of extracellular dopamine and 5-hydroxytryptamine levels, and thereby affects neural activity. May play a role in the perception of pain. Plays a role in the regulation of behavior, including impulsive behavior. Required for normal proliferation of embryonic cardiac myocytes and normal heart development. Protects cardiomyocytes against apoptosis. Plays a role in the adaptation of pulmonary arteries to chronic hypoxia. Plays a role in vasoconstriction. Required for normal osteoblast function and proliferation, and for maintaining normal bone density. Required for normal proliferation of the interstitial cells of Cajal in the intestine. The protein is 5-hydroxytryptamine receptor 2B (HTR2B) of Cavia porcellus (Guinea pig).